Consider the following 114-residue polypeptide: Circadian clock oscillator protein KaiB (114 aa).

It belongs to the KaiB family. May undergo a major conformational rearrangment; in the free state forms homooligomers. When bound to KaiC switches to a monomeric thioredoxin-fold (KaiB(fs)). The active oscillator complex is probably KaiC(6):KaiB(6).

Functionally, component of the KaiBC clock protein complex, which constitutes the main circadian regulator in cyanobacteria; it may modify the ATPase activity of KaiC. Its function is as follows. May be a metamorphic protein which reversibly switches between an inactive tetrameric fold and a rare, thioredoxin-like monomeric fold (KaiB(fs)). KaiB(fs) binds phospho-KaiC, and perhaps clock output effectors. The polypeptide is Circadian clock oscillator protein KaiB (Prochlorococcus marinus (strain MIT 9211)).